Here is an 84-residue protein sequence, read N- to C-terminus: Cell division topological specificity factor (84 aa).

This sequence belongs to the MinE family.

Prevents the cell division inhibition by proteins MinC and MinD at internal division sites while permitting inhibition at polar sites. This ensures cell division at the proper site by restricting the formation of a division septum at the midpoint of the long axis of the cell. The sequence is that of Cell division topological specificity factor from Ectopseudomonas mendocina (strain ymp) (Pseudomonas mendocina).